The following is a 395-amino-acid chain: Biotin biosynthesis cytochrome P450 (395 aa).

Residue R60 participates in substrate binding. 89 to 93 (HRRLR) provides a ligand contact to heme. Residue 169-173 (IDFTR) participates in substrate binding. C250 and C275 are disulfide-bonded. Heme is bound at residue 285-287 (TAR). Residue Y307 coordinates substrate. Residues 343–345 (HVC) and C345 contribute to the heme site.

Heme is required as a cofactor.

The catalysed reaction is a C2-C8-saturated long-chain fatty acyl-[ACP] + 2 reduced [flavodoxin] + 3 O2 = 6-carboxyhexanoyl-[ACP] + a fatty aldehyde + 2 oxidized [flavodoxin] + 3 H2O + 3 H(+). The protein operates within cofactor biosynthesis; biotin biosynthesis. Catalyzes the C-C bond cleavage of fatty acid linked to acyl carrier protein (ACP) to generate pimelic acid for biotin biosynthesis. It has high affinity for long-chain fatty acids with the greatest affinity for myristic acid. In Bacillus subtilis (strain 168), this protein is Biotin biosynthesis cytochrome P450 (bioI).